The sequence spans 285 residues: Nucleotide-binding protein Pfl01_0854 (285 aa).

ATP is bound at residue Gly8–Ser15. Asp60–Asn63 serves as a coordination point for GTP.

This sequence belongs to the RapZ-like family.

Functionally, displays ATPase and GTPase activities. This is Nucleotide-binding protein Pfl01_0854 from Pseudomonas fluorescens (strain Pf0-1).